We begin with the raw amino-acid sequence, 400 residues long: MKFSQSLIALAACFLPLIAAAPEEAQHAKIRSPGAQDIILDSYIVVFNKGVNDADIESEFASVSHILSKRRPAHKGVGHKYNITGFKGYQIETDTGSIGEIAASPLVAWIERDGKVQANALETRSGATWGLGRISHKATGSNSYVYDSSAGSGSTVYVVDSGIYIEHSEFEGRAKWGANYISGSPDTDENGHGTHCAGTIAGATYGVASKANLVAVKVLDGDGSGSNSGVIAGINFVGQNGKDGKSVLSMSLGGSYSAALNSAVESTISNGVTVVVAAGNDGADASNYSPASAKNAITVGAVDSTDTRADFSNYGSVLDVFAPGVDVKSAWIGSKSASNTISGTSMATPHVAGLAAYLIGLGGLSSPAAVASKIASIGIQGSVKDPKGSVNLIAYNGNGA.

An N-terminal signal peptide occupies residues 1–20 (MKFSQSLIALAACFLPLIAA). The propeptide occupies 21-119 (APEEAQHAKI…IERDGKVQAN (99 aa)). Positions 42-117 (SYIVVFNKGV…AWIERDGKVQ (76 aa)) constitute an Inhibitor I9 domain. A glycan (N-linked (GlcNAc...) asparagine) is linked at asparagine 82. The region spanning 128-400 (TWGLGRISHK…NLIAYNGNGA (273 aa)) is the Peptidase S8 domain. Active-site charge relay system residues include aspartate 160, histidine 192, and serine 345.

Belongs to the peptidase S8 family.

Its subcellular location is the secreted. Potently inhibited by the serine peptidase inhibitor chymostatin. Also inhibited by antpain and PMSF. Functionally, major secreted subtilisin-like serine endopeptidase. Preferentially cleaves substrates containing hydrophobic residues at P4, positively charged residues at P3, small or flexible residues at P2, and large, bulky residues at P1. Mediates the degradation of collagen, the major structural protein in the mammalian host. Degrades the nonhelical regions of collagen that function in the cross-linking of the helical components. May function as virulence factor involved in epidermal wing necrosis observed in white nose syndrome (WNS) in bats. The polypeptide is Subtilisin-like protease 2 (Pseudogymnoascus destructans (strain ATCC MYA-4855 / 20631-21) (Bat white-nose syndrome fungus)).